Consider the following 1135-residue polypeptide: Envelopment polyprotein (1135 aa).

Residues 1 to 18 form the signal peptide; the sequence is MGIWKWLVMASLVWPVLT. Residues 19–485 lie on the Lumenal side of the membrane; the sequence is LRNVYDMKIE…VPGFHGWATA (467 aa). 11 disulfides stabilise this stretch: Cys-29-Cys-151, Cys-63-Cys-157, Cys-109-Cys-128, Cys-133-Cys-138, Cys-175-Cys-185, Cys-210-Cys-247, Cys-234-Cys-351, Cys-376-Cys-435, Cys-380-Cys-389, Cys-405-Cys-424, and Cys-452-Cys-475. Residue Asn-134 is glycosylated (N-linked (GlcNAc...) asparagine; by host). Residues Asn-235 and Asn-347 are each glycosylated (N-linked (GlcNAc...) asparagine; by host). Asn-399 carries an N-linked (GlcNAc...) asparagine; by host glycan. The chain crosses the membrane as a helical span at residues 486-506; that stretch reads ALLVTFCFGWVLIPAITFIIL. The Cytoplasmic segment spans residues 507–627; sequence TILKFIANIF…LNLFRYKSRC (121 aa). Positions 516-533 are binding to the ribonucleoprotein; sequence FHTSNQENRLKSVLRKIK. CCHC-type zinc fingers lie at residues 545 to 565 and 570 to 591; these read CDVC…GVSC and CPYC…YKVC. Binding to the ribonucleoprotein regions lie at residues 588-605, 592-603, and 611-625; these read YKVC…KKTV, QVTHRFRDDLKK, and TPGC…RYKS. Positions 611 to 634 constitute an ITAM domain; sequence TPGCYRTLNLFRYKSRCYIFTMWI. Residues 615–618 carry the YxxL motif; sequence YRTL. The chain crosses the membrane as a helical span at residues 628–648; sequence YIFTMWIFLLVLESILWAASA. Topologically, residues 649-1105 are lumenal; it reads SETPLTPVWN…EWISGIFSGN (457 aa). Intrachain disulfides connect Cys-735–Cys-770, Cys-739–Cys-777, Cys-751–Cys-885, Cys-765–Cys-896, Cys-780–Cys-904, Cys-806–Cys-815, Cys-823–Cys-832, and Cys-863–Cys-867. Positions 757-777 are fusion loop; that stretch reads YQYETSWGCNPSDCPGVGTGC. Asn-928 is a glycosylation site (N-linked (GlcNAc...) asparagine; by host). 5 disulfide bridges follow: Cys-970-Cys-1000, Cys-993-Cys-1045, Cys-1010-Cys-1015, Cys-1046-Cys-1051, and Cys-1085-Cys-1089. Residues 1106 to 1126 traverse the membrane as a helical segment; it reads WIVLIVLCVFLLFSLVLLSIL. A binding to the ribonucleoprotein region spans residues 1122 to 1135; it reads LLSILCPVRKHKKS. Topologically, residues 1127–1135 are cytoplasmic; that stretch reads CPVRKHKKS.

Belongs to the hantavirus envelope glycoprotein family. In terms of assembly, homodimer. Homotetramer; forms heterotetrameric Gn-Gc spikes in the pre-fusion conformation. Interacts (via C-terminus) with the nucleoprotein. Interacts with host TUFM; this interaction contributes to the virus-induced degradation of mitochondria by autophagy, which leads to degradation of host MAVS and inhibition of type I interferon (IFN) responses. Interacts with host MAP1LC3B; this interaction contributes to the virus-induced degradation of mitochondria by autophagy, which leads to degradation of host MAVS and inhibition of type I interferon (IFN) responses. As to quaternary structure, homodimer. Homotetramer; forms heterotetrameric Gn-Gc spikes in the pre-fusion conformation. Homotrimer; forms homotrimer in the post-fusion conformation at acidic pH. Interacts (via C-terminus) with the nucleoprotein. Envelope polyprotein precursor is quickly cleaved in vivo just after synthesis, presumably by host signal peptidase.

The protein resides in the virion membrane. It is found in the host cell surface. Its subcellular location is the host Golgi apparatus membrane. The protein localises to the host endoplasmic reticulum membrane. It localises to the host mitochondrion. Forms homotetramers with glycoprotein C at the surface of the virion. Attaches the virion to host cell receptors including integrin ITGAV/ITGB3. This attachment induces virion internalization predominantly through clathrin-dependent endocytosis. May also bind to host C1QBP for virus entry into the host cell. Mediates the assembly and budding of infectious virus particles through its interaction with the nucleocapsid protein and the viral genome. May dysregulate normal immune and endothelial cell responses through an ITAM motif. Translocates to mitochondria, binds to host TUFM and recruits MAP1LC3B. These interactions induce mitochondrial autophagy and therefore destruction of host MAVS leading to inhibition of type I interferon (IFN) responses. Concomitant breakdown of glycoprotein N is apparently prevented by the nucleoprotein that may inhibit Gn-stimulated autophagosome-lysosome fusion. Interacts with the viral genomic RNA. Its function is as follows. Forms homotetramers with glycoprotein N at the surface of the virion. Attaches the virion to host cell receptors including integrin ITGAV/ITGB3. This attachment induces virion internalization predominantly through clathrin-dependent endocytosis. May also bind to host C1QBP for virus entry into the host cell. Class II fusion protein that promotes fusion of viral membrane with host endosomal membrane after endocytosis of the virion. The sequence is that of Envelopment polyprotein (GP) from Hantaan virus (strain Lee) (Lee virus).